Here is a 402-residue protein sequence, read N- to C-terminus: Envelope glycoprotein D (402 aa).

Positions 1 to 17 (MLLAALLAALVARTTLG) are cleaved as a signal peptide. Disulfide bonds link cysteine 66–cysteine 189, cysteine 105–cysteine 205, and cysteine 117–cysteine 126. The tract at residues 238 to 316 (YRKNGRTLPR…RPTPRPPRPE (79 aa)) is profusion. Residues 252-350 (ATPYAIDPAR…PRTPAAPGVS (99 aa)) form a disordered region. Positions 269-278 (PRPRPRPRPR) are enriched in basic residues. Pro residues predominate over residues 282–292 (EPAPATPAPPD). Basic and acidic residues predominate over residues 293–304 (RLPEPATRDHAA). A helical membrane pass occupies residues 356 to 376 (IVGTGTAMGALLVGVCVYIFF).

It belongs to the herpesviridae glycoprotein D family. In terms of processing, not N-glycosylated.

It is found in the virion membrane. In terms of biological role, envelope glycoprotein that binds to the host cell entry receptor NECTIN1, promoting the virus entry into host cells. In contrast, does not use host TNFRSF14 as receptor. May trigger fusion with host membrane, by recruiting the fusion machinery composed of gB and gH/gL. This Suid herpesvirus 1 (strain Rice) (SuHV-1) protein is Envelope glycoprotein D.